Here is a 55-residue protein sequence, read N- to C-terminus: Spermatid nuclear transition protein 1 (55 aa).

Basic residues predominate over residues 1 to 42 (MSTSRKLKSHGMRRGKNRAPHKGVKRGGSKRKYRKGSLKSRK). The interval 1-55 (MSTSRKLKSHGMRRGKNRAPHKGVKRGGSKRKYRKGSLKSRKRCDDANRNYRSHL) is disordered. Residues Ser-9, Ser-37, and Ser-40 each carry the phosphoserine modification.

Belongs to the nuclear transition protein 1 family. As to expression, testis.

Its subcellular location is the nucleus. It localises to the chromosome. In terms of biological role, plays a key role in the replacement of histones to protamine in the elongating spermatids of mammals. In condensing spermatids, loaded onto the nucleosomes, where it promotes the recruitment and processing of protamines, which are responsible for histone eviction. This chain is Spermatid nuclear transition protein 1 (TNP1), found in Sus scrofa (Pig).